Consider the following 367-residue polypeptide: MSLSRVSVTGVRNLHPVTLSPSPRINILYGANGSGKTSVLEAIHLLGIARSFRSSRLLPVIQYVQPSCTVFGQVDLAQGGHSNLGVSRDRQGEFQIRIDGQNARSAAQLAEILPLQLINPDSFRLLEGAPKIRRQFLDWGVFHVEPRFMVTWQRLQKALKQRNSWLRHGTLDAASQAAWDRELCYASDEIDEFRRAYIKALKPVFEQTLSELVELEGLTLSYYRGWDKEKELSTVLASSLHRDQQMGHTQAGPQRADLRLRLGAHNAADILSRGQQKLVVCALRIAQGHLVSQVRRGQCIYLVDDLPSELDDNHRRALCRLLEELRCQVFITCVDQEFLREGWQTETPVALFHVEQGRITQTHDHRE.

Residue 30 to 37 (GANGSGKT) coordinates ATP.

This sequence belongs to the RecF family.

The protein resides in the cytoplasm. Functionally, the RecF protein is involved in DNA metabolism; it is required for DNA replication and normal SOS inducibility. RecF binds preferentially to single-stranded, linear DNA. It also seems to bind ATP. The sequence is that of DNA replication and repair protein RecF from Pseudomonas savastanoi pv. phaseolicola (strain 1448A / Race 6) (Pseudomonas syringae pv. phaseolicola (strain 1448A / Race 6)).